The primary structure comprises 216 residues: FMN-dependent NADH:quinone oxidoreductase 3 (216 aa).

FMN-binding positions include S10 and 16–18; that span reads SAS.

This sequence belongs to the azoreductase type 1 family. Homodimer. Requires FMN as cofactor.

The catalysed reaction is 2 a quinone + NADH + H(+) = 2 a 1,4-benzosemiquinone + NAD(+). It carries out the reaction N,N-dimethyl-1,4-phenylenediamine + anthranilate + 2 NAD(+) = 2-(4-dimethylaminophenyl)diazenylbenzoate + 2 NADH + 2 H(+). In terms of biological role, quinone reductase that provides resistance to thiol-specific stress caused by electrophilic quinones. Functionally, also exhibits azoreductase activity. Catalyzes the reductive cleavage of the azo bond in aromatic azo compounds to the corresponding amines. The polypeptide is FMN-dependent NADH:quinone oxidoreductase 3 (Pseudomonas fluorescens (strain ATCC BAA-477 / NRRL B-23932 / Pf-5)).